Consider the following 714-residue polypeptide: MNVIAIMNHMGVYFKEEPIRELHRALEGLNFRIVYPNDREDLLKLIENNSRLCGVIFDWDKYNLELCEEISKLNEYMPLYAFANSYSTLDVSLNDLRMQVRFFEYALGAAADIAAKIRQNTDEYIDNILPPLTKALFKYVREGKYTFCTPGHMGGTAFQKSPVGSIFYDFFGPNTMKSDISISVSELGSLLDHSGPHKEAEEYIARVFNAERSYMVTNGTSTANKIVGMYSAPAGSTVLIDRNCHKSLTHLMMMSDITPIYFRPTRNAYGILGGIPQSEFQHATIAKRVKETPNATWPVHAVITNSTYDGLLYNTDYIKKTLDVKSIHFDSAWVPYTNFSPIYQGKCGMSGDRVEGKIIYETQSTHKLLAAFSQASMIHVKGDINEETFNEAYMMHTTTSPHYGIVASTETAAAMMKGNAGKRLINGSIERAIKFRKEIKRLKSESDGWFFDVWQPEHIDGAECWPLRSDSAWHGFKNIDNEHMYLDPIKVTILTPGMKKDGTMDEFGIPASLVAKYLDERGIIVEKTGPYNLLFLFSIGIDKTKALSLLRALTEFKRAFDLNLRVKNILPALYREAPEFYENMRIQELAQNIHKLVEHHNLPDLMYRAFEVLPKMVMTPYTAFQKELHGETEEVYLEEMVGRVNANMILPYPPGVPLVMPGEMITEESRPVLEFLQMLCEIGAHYPGFETDIHGAYRQADGRYTVKVLKENTK.

At lysine 367 the chain carries N6-(pyridoxal phosphate)lysine.

This sequence belongs to the Orn/Lys/Arg decarboxylase class-I family. As to quaternary structure, homodecamer. Interacts with RavA. It depends on pyridoxal 5'-phosphate as a cofactor.

The protein localises to the cytoplasm. The enzyme catalyses L-lysine + H(+) = cadaverine + CO2. The chain is Inducible lysine decarboxylase (cadA) from Salmonella typhi.